A 465-amino-acid chain; its full sequence is Cruciform DNA-recognizing protein 1 (465 aa).

2 disordered regions span residues 107 to 227 and 247 to 276; these read EAGG…VPNP and RLNK…ALPQ. Basic residues predominate over residues 127-151; that stretch reads NRKKNKRNNKKRRSKLKKKSTKNNK. Phosphoserine is present on residues Ser-153 and Ser-156. The span at 156 to 165 shows a compositional bias: acidic residues; it reads SLDDNEEEDG. Residues 160–161 are X-DNA-binding; it reads NE. Over residues 166–177 the composition is skewed to low complexity; it reads VTGTTTEDVTGT. Residue Thr-182 is modified to Phosphothreonine. Ser-271 carries the post-translational modification Phosphoserine. Phosphothreonine is present on Thr-295. A disordered region spans residues 298-465; the sequence is VEAVTPLINE…FFGKLKKLFK (168 aa). Phosphoserine occurs at positions 319 and 343. Residues 337–363 show a composition bias toward basic and acidic residues; it reads LVEKRESTEGVLDGSKKVENKAKKDEE. Thr-366 carries the post-translational modification Phosphothreonine. Composition is skewed to basic and acidic residues over residues 385–398 and 404–428; these read AEGR…EEKE and EKGS…EVKK. Ser-394 bears the Phosphoserine mark. Ser-440 carries the post-translational modification Phosphoserine. Residues 451–465 are compositionally biased toward basic residues; sequence KKKTGFFGKLKKLFK.

It belongs to the CRP1/MDG1 family. Cleaved in the vicinity of position 160 to give an X-DNA-binding N-terminal subpeptide and a non-DNA-binding C-terminal subpeptide.

Functionally, cruciform DNA-binding protein which exerts an enhancing effect on the cleavage of cruciform DNA (X-DNA) by endonuclease VII from bacteriophage T4. The sequence is that of Cruciform DNA-recognizing protein 1 (CRP1) from Saccharomyces cerevisiae (strain RM11-1a) (Baker's yeast).